Consider the following 241-residue polypeptide: 1-(5-phosphoribosyl)-5-[(5-phosphoribosylamino)methylideneamino] imidazole-4-carboxamide isomerase (241 aa).

The active-site Proton acceptor is aspartate 7. Aspartate 129 acts as the Proton donor in catalysis.

The protein belongs to the HisA/HisF family.

The protein localises to the cytoplasm. The enzyme catalyses 1-(5-phospho-beta-D-ribosyl)-5-[(5-phospho-beta-D-ribosylamino)methylideneamino]imidazole-4-carboxamide = 5-[(5-phospho-1-deoxy-D-ribulos-1-ylimino)methylamino]-1-(5-phospho-beta-D-ribosyl)imidazole-4-carboxamide. Its pathway is amino-acid biosynthesis; L-histidine biosynthesis; L-histidine from 5-phospho-alpha-D-ribose 1-diphosphate: step 4/9. This is 1-(5-phosphoribosyl)-5-[(5-phosphoribosylamino)methylideneamino] imidazole-4-carboxamide isomerase from Buchnera aphidicola subsp. Baizongia pistaciae (strain Bp).